The following is a 618-amino-acid chain: Uptake hydrogenase large subunit (618 aa).

Residues Cys-75, Cys-78, Cys-597, and Cys-600 each contribute to the Ni(2+) site.

This sequence belongs to the [NiFe]/[NiFeSe] hydrogenase large subunit family. In terms of assembly, heterodimer of a large and a small subunit. It depends on Ni(2+) as a cofactor.

It localises to the cell membrane. The catalysed reaction is H2 + A = AH2. Its function is as follows. This enzyme recycles the H(2) produced by nitrogenase to increase the production of ATP and to protect nitrogenase against inhibition or damage by O(2) under carbon- or phosphate-limited conditions. The protein is Uptake hydrogenase large subunit (hoxG) of Cupriavidus necator (strain ATCC 17699 / DSM 428 / KCTC 22496 / NCIMB 10442 / H16 / Stanier 337) (Ralstonia eutropha).